We begin with the raw amino-acid sequence, 417 residues long: D-amino acid dehydrogenase (417 aa).

3 to 17 (VIVIGSGVIGLTSAW) is an FAD binding site.

The protein belongs to the DadA oxidoreductase family. The cofactor is FAD.

It carries out the reaction a D-alpha-amino acid + A + H2O = a 2-oxocarboxylate + AH2 + NH4(+). It participates in amino-acid degradation; D-alanine degradation; NH(3) and pyruvate from D-alanine: step 1/1. Functionally, oxidative deamination of D-amino acids. This chain is D-amino acid dehydrogenase, found in Vibrio atlanticus (strain LGP32) (Vibrio splendidus (strain Mel32)).